A 625-amino-acid chain; its full sequence is Zinc finger protein 652-A (625 aa).

Residues 80-255 (FFRDSKPINE…PSDKAKSEEK (176 aa)) form a disordered region. A compositionally biased stretch (basic and acidic residues) spans 82-100 (RDSKPINEVHSVKGERENS). Acidic residues predominate over residues 101 to 127 (GESEEEEDDDDDDDDEDDEEGEEDEDE). A compositionally biased stretch (basic and acidic residues) spans 150–166 (KGDKGVAQDSSHIKTSS). Positions 167–186 (DDEEGDSGEDDQDSHEDEEN) are enriched in acidic residues. The span at 240 to 255 (PKEPKSPSDKAKSEEK) shows a compositional bias: basic and acidic residues. The C2H2-type 1 zinc finger occupies 258-281 (LTCDKCPRVFNTRWYLEKHMNVTH). A C2H2-type 2; degenerate zinc finger spans residues 285–307 (QICDKCGKKFVLESELSLHLQTD). 6 consecutive C2H2-type zinc fingers follow at residues 312–335 (IQCITCNKTFKKLWSLHEHIKIVH), 342–364 (FSCEICEKKFYTMAHVRKHLVAH), 370–392 (FTCETCGKSFKRSMSLKVHSLQH), 398–420 (FRCENCDERFQYKYQLRSHMSIH), 426–448 (FMCQWCGKDFNMKQYFDEHMKTH), and 454–476 (FICEICGKSFTSRPNMKRHRRTH). Residues 482 to 505 (YPCDVCGMRFRFSNMLKAHKEKCF) form a C2H2-type 9; degenerate zinc finger.

This sequence belongs to the krueppel C2H2-type zinc-finger protein family.

Its subcellular location is the nucleus. Functionally, may be involved in transcriptional regulation. In Xenopus laevis (African clawed frog), this protein is Zinc finger protein 652-A (znf652-a).